Reading from the N-terminus, the 168-residue chain is G/U mismatch-specific DNA glycosylase (168 aa).

Belongs to the uracil-DNA glycosylase (UDG) superfamily. TDG/mug family. In terms of assembly, binds DNA as a monomer.

It is found in the cytoplasm. It catalyses the reaction Specifically hydrolyzes mismatched double-stranded DNA and polynucleotides, releasing free uracil.. Excises ethenocytosine and uracil, which can arise by alkylation or deamination of cytosine, respectively, from the corresponding mispairs with guanine in ds-DNA. It is capable of hydrolyzing the carbon-nitrogen bond between the sugar-phosphate backbone of the DNA and the mispaired base. The complementary strand guanine functions in substrate recognition. Required for DNA damage lesion repair in stationary-phase cells. In Escherichia fergusonii (strain ATCC 35469 / DSM 13698 / CCUG 18766 / IAM 14443 / JCM 21226 / LMG 7866 / NBRC 102419 / NCTC 12128 / CDC 0568-73), this protein is G/U mismatch-specific DNA glycosylase.